We begin with the raw amino-acid sequence, 437 residues long: GTPase Obg (437 aa).

The Obg domain occupies 2–161; that stretch reads SDFIDRALIT…RELQLELKVI (160 aa). Residues 162 to 335 enclose the OBG-type G domain; it reads ADVGLVGFPN…LQRRIVDILR (174 aa). Residues 168-175, 193-197, 214-217, 284-287, and 316-318 contribute to the GTP site; these read GFPNAGKS, FTTLS, DIPG, NKTD, and SAA. Mg(2+)-binding residues include serine 175 and threonine 195. Residues 355–433 form the OCT domain; it reads FSNIDPNDFW…IEKAELLWQD (79 aa).

Belongs to the TRAFAC class OBG-HflX-like GTPase superfamily. OBG GTPase family. Monomer. Requires Mg(2+) as cofactor.

Its subcellular location is the cytoplasm. Functionally, an essential GTPase which binds GTP, GDP and possibly (p)ppGpp with moderate affinity, with high nucleotide exchange rates and a fairly low GTP hydrolysis rate. Plays a role in control of the cell cycle, stress response, ribosome biogenesis and in those bacteria that undergo differentiation, in morphogenesis control. In Herpetosiphon aurantiacus (strain ATCC 23779 / DSM 785 / 114-95), this protein is GTPase Obg.